Here is a 233-residue protein sequence, read N- to C-terminus: MTRIDSVRAATGSAKDSVLHAAEVVAPYADTAKERAAHYAHEARVRLAPKVTLAAEQARVQYGAHLAPRLEQARTHVPPKVELAAQEAALRTRKAARQAADYSRPMIEQAVAAAGPVRDEAATRAAAALVALRGQVTAEDIQKLVRKHERRARTGRAVRMLAVLGLVAGGAFAAWKWWDKQANPDWLVEPPEATEVPESGRLTSVDGSAEAVLDPEVQAKEAAEEAAKRDDQA.

The segment at residues 93–112 is a DNA-binding region (H-T-H motif); sequence RKAARQAADYSRPMIEQAVA. Residues 190–233 are disordered; the sequence is PPEATEVPESGRLTSVDGSAEAVLDPEVQAKEAAEEAAKRDDQA. Positions 217–233 are enriched in basic and acidic residues; it reads VQAKEAAEEAAKRDDQA.

In terms of biological role, seems to be involved in the regulation of nhs expression. The polypeptide is Putative nosiheptide resistance regulatory protein (Streptomyces actuosus).